Here is a 348-residue protein sequence, read N- to C-terminus: Peptide-N(4)-(N-acetyl-beta-glucosaminyl)asparagine amidase (348 aa).

The Zn(2+) site is built by cysteine 116, cysteine 119, cysteine 151, and cysteine 154. Catalysis depends on cysteine 177, which acts as the Nucleophile. Catalysis depends on residues histidine 204 and aspartate 221. Glutamate 224 contacts substrate. The disordered stretch occupies residues 311–348 (PSATPTKEMQKLKISKTGNKGRISGSAEWKESRGENGK). Residues 338-348 (EWKESRGENGK) are compositionally biased toward basic and acidic residues.

The protein belongs to the transglutaminase-like superfamily. PNGase family. Zn(2+) serves as cofactor.

Its subcellular location is the cytoplasm. The enzyme catalyses Hydrolysis of an N(4)-(acetyl-beta-D-glucosaminyl)asparagine residue in which the glucosamine residue may be further glycosylated, to yield a (substituted) N-acetyl-beta-D-glucosaminylamine and a peptide containing an aspartate residue.. Functionally, specifically deglycosylates the denatured form of N-linked glycoproteins in the cytoplasm and assists their proteasome-mediated degradation. Cleaves the beta-aspartyl-glucosamine (GlcNAc) of the glycan and the amide side chain of Asn, converting Asn to Asp. Prefers proteins containing high-mannose over those bearing complex type oligosaccharides. Can recognize misfolded proteins in the endoplasmic reticulum that are exported to the cytosol to be destroyed and deglycosylate them, while it has no activity toward native proteins. Deglycosylation is a prerequisite for subsequent proteasome-mediated degradation of some, but not all, misfolded glycoproteins. The chain is Peptide-N(4)-(N-acetyl-beta-glucosaminyl)asparagine amidase (PNG1) from Candida glabrata (strain ATCC 2001 / BCRC 20586 / JCM 3761 / NBRC 0622 / NRRL Y-65 / CBS 138) (Yeast).